The primary structure comprises 142 residues: Large ribosomal subunit protein uL11 (142 aa).

The protein belongs to the universal ribosomal protein uL11 family. As to quaternary structure, part of the ribosomal stalk of the 50S ribosomal subunit. Interacts with L10 and the large rRNA to form the base of the stalk. L10 forms an elongated spine to which L12 dimers bind in a sequential fashion forming a multimeric L10(L12)X complex. Post-translationally, one or more lysine residues are methylated.

Forms part of the ribosomal stalk which helps the ribosome interact with GTP-bound translation factors. The polypeptide is Large ribosomal subunit protein uL11 (Baumannia cicadellinicola subsp. Homalodisca coagulata).